A 416-amino-acid chain; its full sequence is RNA polymerase sigma-C factor (416 aa).

Positions 205-218 match the Polymerase core binding motif; the sequence is DLVQEGTLGLERAV. Residues 374-393 constitute a DNA-binding region (H-T-H motif); the sequence is LAEIGRALDLSRERVRQIES.

It belongs to the sigma-70 factor family.

Sigma factors are initiation factors that promote the attachment of RNA polymerase to specific initiation sites and are then released. This chain is RNA polymerase sigma-C factor (sigC), found in Nostoc sp. (strain PCC 7120 / SAG 25.82 / UTEX 2576).